The chain runs to 471 residues: 3-isopropylmalate dehydratase large subunit (471 aa).

The [4Fe-4S] cluster site is built by Cys349, Cys410, and Cys413.

This sequence belongs to the aconitase/IPM isomerase family. LeuC type 1 subfamily. In terms of assembly, heterodimer of LeuC and LeuD. The cofactor is [4Fe-4S] cluster.

The catalysed reaction is (2R,3S)-3-isopropylmalate = (2S)-2-isopropylmalate. It functions in the pathway amino-acid biosynthesis; L-leucine biosynthesis; L-leucine from 3-methyl-2-oxobutanoate: step 2/4. In terms of biological role, catalyzes the isomerization between 2-isopropylmalate and 3-isopropylmalate, via the formation of 2-isopropylmaleate. This Chromobacterium violaceum (strain ATCC 12472 / DSM 30191 / JCM 1249 / CCUG 213 / NBRC 12614 / NCIMB 9131 / NCTC 9757 / MK) protein is 3-isopropylmalate dehydratase large subunit.